The chain runs to 486 residues: MLTEQPNWLMQRAQLTPERIALIYEDQTVTFAELFAASKRMAEQLAAHSVRKGDTAAILLQNRAEMVYAVHACFLLGVKAVLLNTKLSTHERLFQLEDSGSGFLLTDSSFEKKEYEHIVQTIDVDELMKEAAEEIEIEAYMQMDATATLMYTSGTTGKPKGVQQTFGNHYFSAVSSALNLGITEQDRWLIALPLFHISGLSALFKSVIYGMTVVLHQRFSVSDVLHSINRHEVTMISAVQTMLASLLEETNRCPESIRCILLGGGPAPLPLLEECREKGFPVFQSYGMTETCSQIVTLSPEFSMEKLGSAGKPLFSCEIKIERDGQVCEPYEHGEIMVKGPNVMKSYFNRESANEASFQNGWLKTGDLGYLDNEGFLYVLDRRSDLIISGGENIYPAEVESVLLSHPAVAEAGVSGAEDKKWGKVPHAYLVLHKPVSAGELTDYCKERLAKYKIPAKFFVLDRLPRNASNKLLRNQLKDARKGELL.

Belongs to the ATP-dependent AMP-binding enzyme family. MenE subfamily.

The catalysed reaction is 2-succinylbenzoate + ATP + CoA = 2-succinylbenzoyl-CoA + AMP + diphosphate. Its pathway is quinol/quinone metabolism; 1,4-dihydroxy-2-naphthoate biosynthesis; 1,4-dihydroxy-2-naphthoate from chorismate: step 5/7. It participates in quinol/quinone metabolism; menaquinone biosynthesis. Its function is as follows. Converts 2-succinylbenzoate (OSB) to 2-succinylbenzoyl-CoA (OSB-CoA). The polypeptide is 2-succinylbenzoate--CoA ligase (Bacillus subtilis (strain 168)).